The sequence spans 377 residues: Interferon gamma receptor 1 (377 aa).

Residues 1 to 23 (MRTQIYISVTVLILLLKKSDLEA) form the signal peptide. The Extracellular segment spans residues 24-235 (VRVPSPESVS…IRRYTPFTVY (212 aa)). One can recognise a Fibronectin type-III domain in the interval 26–117 (VPSPESVSVQ…DFFIFSFNEN (92 aa)). N78 and N186 each carry an N-linked (GlcNAc...) asparagine glycan. A helical transmembrane segment spans residues 236-256 (LYPVLGVTLTLLFITGIIILL). Topologically, residues 257-377 (EKKCNSEMKK…TVDSYGPRLL (121 aa)) are cytoplasmic. The interval 326-377 (VYSEDKNSYGPNDLVEDEQSDLSDFYDCPHAPKQKREMSPGDTVDSYGPRLL) is disordered.

This sequence belongs to the type II cytokine receptor family. In terms of tissue distribution, highly expressed in spleen. Also detected in brain, kidney, gill, intestine and heart. Expressed at very low levels in muscle. In immune cell populations, shows highest expression in monocytes, and slightly lower expression in peripheral blood leukocytes, splenocytes, neutrophils and mature macrophages.

The protein resides in the cell membrane. Its function is as follows. Receptor which shows binding specificity for the cytokine ifng1r (interferon gamma-related). This chain is Interferon gamma receptor 1, found in Carassius auratus (Goldfish).